Here is a 561-residue protein sequence, read N- to C-terminus: Potassium-transporting ATPase potassium-binding subunit (561 aa).

The next 11 helical transmembrane spans lie at 5 to 25, 60 to 80, 86 to 106, 131 to 151, 177 to 197, 247 to 267, 281 to 301, 376 to 396, 415 to 435, 489 to 509, and 531 to 551; these read LAAGLQIASVVAVLALVYVPL, CGYAGSVLGFSLAGVLVLYVL, VLPLSHGLAGVSPAVAFNTAV, GLAVQNFVSAAVGMAVAVALI, ILLPLAFVIALILLSQGVIQS, PTPLSNVVQILAILLIPVALT, LTVLAVMAGIYAVILGVTTAA, GLYGILVLAVIAVFVGGLLVG, ALAVLVMPALVLIGTAITVVL, LGLCMLFGRFLPILFVLALAG, and FAGLLTGTVVLVAALTFFPVL.

It belongs to the KdpA family. In terms of assembly, the system is composed of three essential subunits: KdpA, KdpB and KdpC.

The protein resides in the cell membrane. Functionally, part of the high-affinity ATP-driven potassium transport (or Kdp) system, which catalyzes the hydrolysis of ATP coupled with the electrogenic transport of potassium into the cytoplasm. This subunit binds the extracellular potassium ions and delivers the ions to the membrane domain of KdpB through an intramembrane tunnel. This chain is Potassium-transporting ATPase potassium-binding subunit, found in Nocardia farcinica (strain IFM 10152).